We begin with the raw amino-acid sequence, 178 residues long: Large ribosomal subunit protein uL6 (178 aa).

The protein belongs to the universal ribosomal protein uL6 family. Part of the 50S ribosomal subunit.

Its function is as follows. This protein binds to the 23S rRNA, and is important in its secondary structure. It is located near the subunit interface in the base of the L7/L12 stalk, and near the tRNA binding site of the peptidyltransferase center. This Streptococcus pneumoniae (strain JJA) protein is Large ribosomal subunit protein uL6.